We begin with the raw amino-acid sequence, 62 residues long: Large ribosomal subunit protein bL28 (62 aa).

The interval 1–26 (MARKCYVTGKSPKSGNNRSHALNKTK) is disordered. Residues 11 to 20 (SPKSGNNRSH) are compositionally biased toward polar residues.

Belongs to the bacterial ribosomal protein bL28 family.

In Exiguobacterium sp. (strain ATCC BAA-1283 / AT1b), this protein is Large ribosomal subunit protein bL28.